Reading from the N-terminus, the 235-residue chain is MLTLIAILAISYLVGAIPTGIMAGKMLKGIDIRQFGSGNAGGTNAFRVLGWKAGLAVTLLDILKGIVAAVSIVAFFRHHPVGAFPDINEVALRLLAGMSAVIGHVFTVFAGFKGGKGVSTAAGMLIGIAPVSMLIVIGIFLLTVYVSRYVSVASILAAIAFPLIIAIRKYIFELGGGLDYYVKLFGERFSFHDSLDYHLMIFGLIVALAILYTHRANIRRLLSGTENRIKFGRHS.

The next 6 helical transmembrane spans lie at 4–24 (LIAILAISYLVGAIPTGIMAG), 56–76 (AVTLLDILKGIVAAVSIVAFF), 94–114 (LLAGMSAVIGHVFTVFAGFKG), 122–142 (AGMLIGIAPVSMLIVIGIFLL), 152–172 (VASILAAIAFPLIIAIRKYIF), and 191–211 (FHDSLDYHLMIFGLIVALAIL).

Belongs to the PlsY family. In terms of assembly, probably interacts with PlsX.

The protein resides in the cell inner membrane. It carries out the reaction an acyl phosphate + sn-glycerol 3-phosphate = a 1-acyl-sn-glycero-3-phosphate + phosphate. Its pathway is lipid metabolism; phospholipid metabolism. Catalyzes the transfer of an acyl group from acyl-phosphate (acyl-PO(4)) to glycerol-3-phosphate (G3P) to form lysophosphatidic acid (LPA). This enzyme utilizes acyl-phosphate as fatty acyl donor, but not acyl-CoA or acyl-ACP. This chain is Glycerol-3-phosphate acyltransferase, found in Chlorobium phaeobacteroides (strain DSM 266 / SMG 266 / 2430).